Here is a 217-residue protein sequence, read N- to C-terminus: Large ribosomal subunit protein uL1 (217 aa).

Belongs to the universal ribosomal protein uL1 family.

This chain is Large ribosomal subunit protein uL1 (RpL10Ab), found in Drosophila melanogaster (Fruit fly).